Reading from the N-terminus, the 131-residue chain is Large ribosomal subunit protein uL18 (131 aa).

The protein belongs to the universal ribosomal protein uL18 family. In terms of assembly, part of the 50S ribosomal subunit; part of the 5S rRNA/L5/L18/L25 subcomplex. Contacts the 5S and 23S rRNAs.

Its function is as follows. This is one of the proteins that bind and probably mediate the attachment of the 5S RNA into the large ribosomal subunit, where it forms part of the central protuberance. The protein is Large ribosomal subunit protein uL18 of Corynebacterium kroppenstedtii (strain DSM 44385 / JCM 11950 / CIP 105744 / CCUG 35717).